The following is a 264-amino-acid chain: Thymidylate synthase (264 aa).

Arginine 21 contacts dUMP. Residue histidine 51 participates in (6R)-5,10-methylene-5,6,7,8-tetrahydrofolate binding. The Nucleophile role is filled by cysteine 146. Residues 166-169, asparagine 177, and 207-209 each bind dUMP; these read RSAD and HIY. (6R)-5,10-methylene-5,6,7,8-tetrahydrofolate is bound at residue aspartate 169. A (6R)-5,10-methylene-5,6,7,8-tetrahydrofolate-binding site is contributed by alanine 263.

Belongs to the thymidylate synthase family. Bacterial-type ThyA subfamily. As to quaternary structure, homodimer.

Its subcellular location is the cytoplasm. It carries out the reaction dUMP + (6R)-5,10-methylene-5,6,7,8-tetrahydrofolate = 7,8-dihydrofolate + dTMP. The protein operates within pyrimidine metabolism; dTTP biosynthesis. Functionally, catalyzes the reductive methylation of 2'-deoxyuridine-5'-monophosphate (dUMP) to 2'-deoxythymidine-5'-monophosphate (dTMP) while utilizing 5,10-methylenetetrahydrofolate (mTHF) as the methyl donor and reductant in the reaction, yielding dihydrofolate (DHF) as a by-product. This enzymatic reaction provides an intracellular de novo source of dTMP, an essential precursor for DNA biosynthesis. The chain is Thymidylate synthase from Brucella canis (strain ATCC 23365 / NCTC 10854 / RM-666).